A 434-amino-acid chain; its full sequence is Innexin-14 (434 aa).

4 consecutive transmembrane segments (helical) span residues 30-50, 106-126, 301-321, and 365-385; these read LFTV…QHFG, WVPF…WCWA, IFIG…IGTV, and YLCA…GFLK.

Belongs to the pannexin family.

The protein localises to the cell membrane. It is found in the cell junction. Its subcellular location is the gap junction. Functionally, structural component of the gap junctions. The sequence is that of Innexin-14 (inx-14) from Caenorhabditis elegans.